Reading from the N-terminus, the 232-residue chain is Octanoyltransferase (232 aa).

The region spanning 32 to 219 (DTIYDTLILL…SFMVFNFSSC (188 aa)) is the BPL/LPL catalytic domain. Residues 77–84 (RGGDITYH), 140–142 (AIG), and 153–155 (GFA) contribute to the substrate site. The active-site Acyl-thioester intermediate is Cys171.

It belongs to the LipB family.

The protein localises to the cytoplasm. It catalyses the reaction octanoyl-[ACP] + L-lysyl-[protein] = N(6)-octanoyl-L-lysyl-[protein] + holo-[ACP] + H(+). The protein operates within protein modification; protein lipoylation via endogenous pathway; protein N(6)-(lipoyl)lysine from octanoyl-[acyl-carrier-protein]: step 1/2. In terms of biological role, catalyzes the transfer of endogenously produced octanoic acid from octanoyl-acyl-carrier-protein onto the lipoyl domains of lipoate-dependent enzymes. Lipoyl-ACP can also act as a substrate although octanoyl-ACP is likely to be the physiological substrate. The chain is Octanoyltransferase from Dictyoglomus thermophilum (strain ATCC 35947 / DSM 3960 / H-6-12).